Consider the following 333-residue polypeptide: Thiamine-monophosphate kinase (333 aa).

Positions 44, 58, 59, and 60 each coordinate Mg(2+). Position 67 (H67) interacts with substrate. Positions 89 and 137 each coordinate Mg(2+). ATP contacts are provided by residues 136 to 137 and R162; that span reads GD. Residue D224 coordinates Mg(2+). S226 serves as a coordination point for ATP. D227 is a Mg(2+) binding site. 2 residues coordinate substrate: E278 and W320.

The protein belongs to the thiamine-monophosphate kinase family.

The enzyme catalyses thiamine phosphate + ATP = thiamine diphosphate + ADP. The protein operates within cofactor biosynthesis; thiamine diphosphate biosynthesis; thiamine diphosphate from thiamine phosphate: step 1/1. Its function is as follows. Catalyzes the ATP-dependent phosphorylation of thiamine-monophosphate (TMP) to form thiamine-pyrophosphate (TPP), the active form of vitamin B1. The sequence is that of Thiamine-monophosphate kinase from Mycobacterium tuberculosis (strain CDC 1551 / Oshkosh).